The sequence spans 440 residues: Streptokinase A (440 aa).

Positions 1–26 (MKNYLSIGVIALLFALTFGTVKSVQA) are cleaved as a signal peptide.

This protein is not a protease, but it activates plasminogen by complexing with it. As a potential virulence factor, it is thought to prevent the formation of effective fibrin barriers around the site of infection, thereby contributing to the invasiveness of the cells. In Streptococcus pyogenes serotype M1, this protein is Streptokinase A (ska).